A 216-amino-acid chain; its full sequence is Purine nucleoside phosphorylase DeoD-type (216 aa).

Residues R4, R23, and 67-70 (RVGT) contribute to the phosphate site. A purine D-ribonucleoside-binding positions include 159 to 161 (EME) and 183 to 184 (SD). The Proton donor role is filled by D184.

Belongs to the PNP/UDP phosphorylase family. In terms of assembly, homohexamer; trimer of homodimers.

The enzyme catalyses a purine D-ribonucleoside + phosphate = a purine nucleobase + alpha-D-ribose 1-phosphate. It catalyses the reaction a purine 2'-deoxy-D-ribonucleoside + phosphate = a purine nucleobase + 2-deoxy-alpha-D-ribose 1-phosphate. In terms of biological role, catalyzes the reversible phosphorolytic breakdown of the N-glycosidic bond in the beta-(deoxy)ribonucleoside molecules, with the formation of the corresponding free purine bases and pentose-1-phosphate. This Streptococcus thermophilus protein is Purine nucleoside phosphorylase DeoD-type.